Consider the following 891-residue polypeptide: Tubulin polyglutamylase TTLL6 (891 aa).

Disordered regions lie at residues 1–25 and 44–106; these read MGALLLHPSRRGPAGVVASWTSSPA and SQAR…KRKK. Residues 63–76 show a composition bias toward basic and acidic residues; the sequence is SEEKGDSSKEDPKE. Residues 88–99 show a composition bias toward low complexity; that stretch reads GAQNGLQNAQQQ. Positions 106–449 constitute a TTL domain; it reads KKRLVINLSS…ESCDKKKVLE (344 aa). ATP-binding positions include Lys-223, 229 to 230, 251 to 254, and 264 to 266; these read QG, QLYI, and KFD. Position 229 (Gln-229) interacts with a protein. An L-glutamate-binding site is contributed by Arg-290. 312–313 contacts ATP; sequence TN. L-glutamate contacts are provided by Tyr-314, Ser-315, and Lys-332. Mg(2+)-binding residues include Asp-395, Glu-408, and Asn-410. His-411 is a binding site for a protein. Positions 420–499 are c-MTBD region; the sequence is RLDKEVKDGL…CGGFRLIYPS (80 aa). Lys-426 lines the L-glutamate pocket. Disordered regions lie at residues 546–584, 607–636, 687–711, and 800–820; these read QMKKKVEMQGESAGEQVRKKGMRGWQQKQQQKDKAATQA, GERKNETDSSLNQEAPTEEASSVFPKLTSA, TTPESTTQLSISPKSPPTLAVTASS, and NNLSQNPSLPGECHSRSDSSG. Positions 687–699 are enriched in polar residues; the sequence is TTPESTTQLSISP.

It belongs to the tubulin--tyrosine ligase family. As to quaternary structure, found in a complex with CEP41. The cofactor is Mg(2+).

It localises to the cytoplasm. It is found in the cytoskeleton. The protein localises to the cilium axoneme. The protein resides in the cilium basal body. The catalysed reaction is L-glutamyl-[protein] + L-glutamate + ATP = gamma-L-glutamyl-L-glutamyl-[protein] + ADP + phosphate + H(+). The enzyme catalyses (L-glutamyl)(n)-gamma-L-glutamyl-L-glutamyl-[protein] + L-glutamate + ATP = (L-glutamyl)(n+1)-gamma-L-glutamyl-L-glutamyl-[protein] + ADP + phosphate + H(+). Polyglutamylase which modifies both tubulin and non-tubulin proteins, generating alpha-linked polyglutamate side chains on the gamma-carboxyl group of specific glutamate residues of target proteins. Preferentially mediates ATP-dependent long polyglutamate chain elongation over the initiation step of the polyglutamylation reaction. Preferentially modifies the alpha-tubulin tail over a beta-tail. Promotes tubulin polyglutamylation which stimulates spastin/SPAST-mediated microtubule severing, thereby regulating microtubule functions. Mediates microtubule polyglutamylation in primary cilia axoneme, which is important for ciliary structural formation and motility. Mediates microtubule polyglutamylation in motile cilia, necessary for the regulation of ciliary coordinated beating. Polyglutamylates non-tubulin protein nucleotidyltransferase CGAS, leading to CGAS DNA-binding inhibition, thereby preventing antiviral defense response. This Homo sapiens (Human) protein is Tubulin polyglutamylase TTLL6.